Here is a 402-residue protein sequence, read N- to C-terminus: MNDYKQFFPWFKNNKDVIYLDSSATSLKPQVVIDAIVDYYTKYSTNPHNTDSNFTFHTHEIMNETRANVAKFINANFDEIIFTSGATESLNLIANGLRPHLKKGDEIILTYIEHASNLLPWYKLRDDLGVKIIFANQKNQFPQLSDFLKVISPKTKVVSFASGGNLIGNVLDENLIIKNIKKIKPDVLVCVDATQSIQHRMFDVKKCKSDFMVFSAHKLLGPTGIGVAYIKNDLIKKMQPLKYGGGMNFSIDLNSYQLYDNYMKFEGGTPHVAGFYGFNAALKFLMDIGYNKIHEHELKITKYARDQLALIPEIKTYVQDATSSTITFSYNGVFCQDFANYLGSKNIIVRSGLSCAKIINNVIQTECAIRASFYIYNDFNDVDRLIKAIKEYQKGDELNGIL.

Position 218 is an N6-(pyridoxal phosphate)lysine (Lys-218).

It belongs to the class-V pyridoxal-phosphate-dependent aminotransferase family. Csd subfamily. It depends on pyridoxal 5'-phosphate as a cofactor.

It catalyses the reaction (sulfur carrier)-H + L-cysteine = (sulfur carrier)-SH + L-alanine. Functionally, catalyzes the removal of elemental sulfur and selenium atoms from L-cysteine, L-cystine, L-selenocysteine, and L-selenocystine to produce L-alanine. This is Probable cysteine desulfurase (csd) from Ureaplasma parvum serovar 3 (strain ATCC 700970).